The primary structure comprises 484 residues: Zinc metalloproteinase-disintegrin stejnitin (484 aa).

The N-terminal stretch at 1 to 20 (MIQVLLVTICLAVFPYQGNS) is a signal peptide. Residues 21 to 192 (IILESGNVND…ASQLNLTPDE (172 aa)) constitute a propeptide that is removed on maturation. Gln-193 is subject to Pyrrolidone carboxylic acid. Positions 194–392 (RFIELVIVAD…YTSRCLYNGP (199 aa)) constitute a Peptidase M12B domain. A Ca(2+)-binding site is contributed by Glu-197. Asn-254 carries N-linked (GlcNAc...) asparagine glycosylation. Asp-281 lines the Ca(2+) pocket. Disulfide bonds link Cys-305-Cys-387, Cys-345-Cys-369, and Cys-347-Cys-352. Zn(2+) contacts are provided by His-330, His-334, and His-340. Ca(2+)-binding residues include Cys-387, Asn-390, Val-402, Asn-405, Glu-409, Glu-412, and Asp-415. Residues 400–484 (PPVCGNYYVE…GDCPRNPFRA (85 aa)) enclose the Disintegrin domain. 7 disulfides stabilise this stretch: Cys-403/Cys-422, Cys-414/Cys-432, Cys-416/Cys-427, Cys-426/Cys-449, Cys-440/Cys-446, Cys-445/Cys-470, and Cys-458/Cys-477. The Cell attachment site motif lies at 462-464 (KGD).

It belongs to the venom metalloproteinase (M12B) family. P-II subfamily. P-IIb sub-subfamily. Zn(2+) is required as a cofactor. In terms of processing, the N-terminus is blocked. Expressed by the venom gland.

It localises to the secreted. In terms of biological role, snake venom zinc metalloproteinase that inhibits ADP-induced platelet aggregation in human platelet-rich plasma (IC(50) is 175 nM) and cleaves alpha-(FGA) and subsequently the beta-chain (FGG) of bovine fibrinogen, leaving the gamma-chain unaffected. It is also able to inhibit proliferatin of ECV304 cells by inducing apoptosis of these cells. This chain is Zinc metalloproteinase-disintegrin stejnitin, found in Trimeresurus stejnegeri (Chinese green tree viper).